The following is a 246-amino-acid chain: tRNA (guanine-N(1)-)-methyltransferase (246 aa).

S-adenosyl-L-methionine-binding positions include Gly-114 and Ile-134 to Leu-139.

It belongs to the RNA methyltransferase TrmD family. In terms of assembly, homodimer.

It is found in the cytoplasm. It carries out the reaction guanosine(37) in tRNA + S-adenosyl-L-methionine = N(1)-methylguanosine(37) in tRNA + S-adenosyl-L-homocysteine + H(+). Specifically methylates guanosine-37 in various tRNAs. The sequence is that of tRNA (guanine-N(1)-)-methyltransferase from Coxiella burnetii (strain RSA 493 / Nine Mile phase I).